The primary structure comprises 372 residues: Queuine tRNA-ribosyltransferase (372 aa).

Catalysis depends on Asp-89, which acts as the Proton acceptor. Substrate contacts are provided by residues 89–93 (DSGGF), Asp-161, and Gly-232. Residues 262–268 (GIGDLPS) form an RNA binding region. Asp-281 (nucleophile) is an active-site residue. Positions 286–290 (TKAAR) are RNA binding; important for wobble base 34 recognition. 4 residues coordinate Zn(2+): Cys-319, Cys-321, Cys-324, and His-351.

The protein belongs to the queuine tRNA-ribosyltransferase family. In terms of assembly, homodimer. Within each dimer, one monomer is responsible for RNA recognition and catalysis, while the other monomer binds to the replacement base PreQ1. Requires Zn(2+) as cofactor.

It catalyses the reaction 7-aminomethyl-7-carbaguanine + guanosine(34) in tRNA = 7-aminomethyl-7-carbaguanosine(34) in tRNA + guanine. The protein operates within tRNA modification; tRNA-queuosine biosynthesis. Its function is as follows. Catalyzes the base-exchange of a guanine (G) residue with the queuine precursor 7-aminomethyl-7-deazaguanine (PreQ1) at position 34 (anticodon wobble position) in tRNAs with GU(N) anticodons (tRNA-Asp, -Asn, -His and -Tyr). Catalysis occurs through a double-displacement mechanism. The nucleophile active site attacks the C1' of nucleotide 34 to detach the guanine base from the RNA, forming a covalent enzyme-RNA intermediate. The proton acceptor active site deprotonates the incoming PreQ1, allowing a nucleophilic attack on the C1' of the ribose to form the product. After dissociation, two additional enzymatic reactions on the tRNA convert PreQ1 to queuine (Q), resulting in the hypermodified nucleoside queuosine (7-(((4,5-cis-dihydroxy-2-cyclopenten-1-yl)amino)methyl)-7-deazaguanosine). This chain is Queuine tRNA-ribosyltransferase, found in Chlamydia trachomatis serovar A (strain ATCC VR-571B / DSM 19440 / HAR-13).